Consider the following 232-residue polypeptide: Ribose-5-phosphate isomerase A (232 aa).

Substrate is bound by residues 31–34, 87–90, and 100–103; these read TGST, DGAD, and KGGG. The Proton acceptor role is filled by Glu-109. Lys-127 contacts substrate.

Belongs to the ribose 5-phosphate isomerase family. Homodimer.

It catalyses the reaction aldehydo-D-ribose 5-phosphate = D-ribulose 5-phosphate. Its pathway is carbohydrate degradation; pentose phosphate pathway; D-ribose 5-phosphate from D-ribulose 5-phosphate (non-oxidative stage): step 1/1. Catalyzes the reversible conversion of ribose-5-phosphate to ribulose 5-phosphate. This chain is Ribose-5-phosphate isomerase A, found in Bifidobacterium longum (strain DJO10A).